Here is a 180-residue protein sequence, read N- to C-terminus: Acireductone dioxygenase (180 aa).

H97, H99, E103, and H141 together coordinate Fe(2+). 4 residues coordinate Ni(2+): H97, H99, E103, and H141.

The protein belongs to the acireductone dioxygenase (ARD) family. Monomer. Requires Fe(2+) as cofactor. The cofactor is Ni(2+).

It carries out the reaction 1,2-dihydroxy-5-(methylsulfanyl)pent-1-en-3-one + O2 = 3-(methylsulfanyl)propanoate + CO + formate + 2 H(+). The catalysed reaction is 1,2-dihydroxy-5-(methylsulfanyl)pent-1-en-3-one + O2 = 4-methylsulfanyl-2-oxobutanoate + formate + 2 H(+). It functions in the pathway amino-acid biosynthesis; L-methionine biosynthesis via salvage pathway; L-methionine from S-methyl-5-thio-alpha-D-ribose 1-phosphate: step 5/6. Its function is as follows. Catalyzes 2 different reactions between oxygen and the acireductone 1,2-dihydroxy-3-keto-5-methylthiopentene (DHK-MTPene) depending upon the metal bound in the active site. Fe-containing acireductone dioxygenase (Fe-ARD) produces formate and 2-keto-4-methylthiobutyrate (KMTB), the alpha-ketoacid precursor of methionine in the methionine recycle pathway. Ni-containing acireductone dioxygenase (Ni-ARD) produces methylthiopropionate, carbon monoxide and formate, and does not lie on the methionine recycle pathway. The protein is Acireductone dioxygenase of Yersinia enterocolitica serotype O:8 / biotype 1B (strain NCTC 13174 / 8081).